A 270-amino-acid chain; its full sequence is Putative phosphoenolpyruvate synthase regulatory protein (270 aa).

150–157 contacts ADP; it reads GVSRCGKT.

This sequence belongs to the pyruvate, phosphate/water dikinase regulatory protein family. PSRP subfamily.

It carries out the reaction [pyruvate, water dikinase] + ADP = [pyruvate, water dikinase]-phosphate + AMP + H(+). The catalysed reaction is [pyruvate, water dikinase]-phosphate + phosphate + H(+) = [pyruvate, water dikinase] + diphosphate. Functionally, bifunctional serine/threonine kinase and phosphorylase involved in the regulation of the phosphoenolpyruvate synthase (PEPS) by catalyzing its phosphorylation/dephosphorylation. The chain is Putative phosphoenolpyruvate synthase regulatory protein from Shewanella baltica (strain OS223).